Reading from the N-terminus, the 469-residue chain is 3-isopropylmalate dehydratase large subunit (469 aa).

The [4Fe-4S] cluster site is built by C347, C407, and C410.

Belongs to the aconitase/IPM isomerase family. LeuC type 1 subfamily. In terms of assembly, heterodimer of LeuC and LeuD. [4Fe-4S] cluster serves as cofactor.

The enzyme catalyses (2R,3S)-3-isopropylmalate = (2S)-2-isopropylmalate. It participates in amino-acid biosynthesis; L-leucine biosynthesis; L-leucine from 3-methyl-2-oxobutanoate: step 2/4. Functionally, catalyzes the isomerization between 2-isopropylmalate and 3-isopropylmalate, via the formation of 2-isopropylmaleate. The polypeptide is 3-isopropylmalate dehydratase large subunit (Prochlorococcus marinus (strain NATL2A)).